The sequence spans 129 residues: Small ribosomal subunit protein uS11 (129 aa).

Belongs to the universal ribosomal protein uS11 family. Part of the 30S ribosomal subunit. Interacts with proteins S7 and S18. Binds to IF-3.

Functionally, located on the platform of the 30S subunit, it bridges several disparate RNA helices of the 16S rRNA. Forms part of the Shine-Dalgarno cleft in the 70S ribosome. The protein is Small ribosomal subunit protein uS11 of Nitrosospira multiformis (strain ATCC 25196 / NCIMB 11849 / C 71).